A 678-amino-acid chain; its full sequence is Probable metal-nicotianamine transporter YSL6 (678 aa).

A run of 14 helical transmembrane segments spans residues 41–61 (VTVR…LITH), 65–85 (LTVG…YFLV), 113–133 (CVVA…MLAM), 158–178 (LGWM…SLVA), 226–246 (ISFF…SCGF), 279–299 (IVNC…WPYI), 324–344 (VFIS…KIIY), 394–414 (LAGS…PMIF), 419–439 (WYLV…NSYG), 467–487 (GGVI…STAA), 512–532 (IGTT…WTAF), 561–581 (SALP…AILI), 606–626 (FYIG…LFVW), and 641–661 (IASG…ILSI).

It belongs to the YSL (TC 2.A.67.2) family. As to expression, expressed in roots and leaves.

The protein localises to the membrane. May be involved in the transport of nicotianamine-chelated metals. The protein is Probable metal-nicotianamine transporter YSL6 (YSL6) of Oryza sativa subsp. japonica (Rice).